We begin with the raw amino-acid sequence, 466 residues long: Acetylcholine-gated chloride channel subunit acc-1 (466 aa).

The signal sequence occupies residues 1–24 (MSHPGWIMVSFLTELLSQSSKGIA). The Extracellular portion of the chain corresponds to 25-242 (QSLDNCANDT…FVFERRYGWY (218 aa)). N-linked (GlcNAc...) asparagine glycosylation is found at asparagine 32, asparagine 102, and asparagine 143. Cysteines 158 and 172 form a disulfide. A glycan (N-linked (GlcNAc...) asparagine) is linked at asparagine 211. Residues 243-263 (VLQGYIPTMVTIVISWISFYL) traverse the membrane as a helical segment. The Cytoplasmic segment spans residues 264–272 (GPRAIPART). The helical transmembrane segment at 273–290 (MLGVNSLLAMTFQFGNII) threads the bilayer. At 291–304 (RNLPRVSYVKAIDV) the chain is on the extracellular side. The chain crosses the membrane as a helical span at residues 305 to 325 (WMLSGMLFIFLSLLELAVVGF). The Cytoplasmic segment spans residues 326–427 (MSRNEGLPPK…MRELRPETVD (102 aa)). The disordered stretch occupies residues 333–352 (PPKVKKRKRQEDDDEGFSWK). The chain crosses the membrane as a helical span at residues 428–448 (FYSAIFFPTAYMLFNISYWSF). The Extracellular segment spans residues 449–466 (YLTSLSEYFDEDVNIDQP).

It belongs to the ligand-gated ion channel (TC 1.A.9) family. In terms of assembly, homopentamer (in vitro). Forms heteropentamers composed of acc-1 and acc-4 or acc-1 and acc-3. Both homopentamers and heteropentamers form functional ion channels. Expressed in a subset of cholinergic motor neurons including cholinergic motor neurons in the ventral cord, the retrovesicular ganglion and in head neurons such as the SMD, RMD motor neurons, the AVA and AVE command interneurons and the SAA neurons. Also expressed in a small number of glutamatergic neurons including the pharyngeal neurons MI and M3, the PLM neurons and a pair of neurons in the lateral ganglion.

Its subcellular location is the cell membrane. Its function is as follows. Acetylcholine-gated chloride channel subunit. Forms functional homopentameric (in vitro) and functional heteropentameric ion channels with acc-3 and acc-4 ion channel subunits. Currents in channels are triggered in response to acetylcholine, but not in response to GABA, glutamate, glycine, histamine or dopamine. The sequence is that of Acetylcholine-gated chloride channel subunit acc-1 from Caenorhabditis elegans.